The primary structure comprises 1303 residues: Ninein-like protein (1303 aa).

2 consecutive EF-hand domains span residues arginine 8–aspartate 43 and arginine 61–arginine 77. Residues threonine 107–aspartate 135 form a disordered region. EF-hand domains lie at valine 203 to lysine 238 and leucine 240 to histidine 275. Ca(2+) contacts are provided by aspartate 253, aspartate 255, aspartate 257, lysine 259, and glutamate 264. Residues glutamate 464–glutamine 590 adopt a coiled-coil conformation. Positions serine 592–glutamate 617 are enriched in polar residues. Residues serine 592 to arginine 634 form a disordered region. Coiled-coil stretches lie at residues glutamate 660–glutamate 791, leucine 821–arginine 876, and serine 919–glutamine 1146. The tract at residues glutamate 1156–glutamine 1181 is disordered. A compositionally biased stretch (polar residues) spans glycine 1159–glutamate 1175. Residues glutamine 1202–lysine 1278 adopt a coiled-coil conformation.

Its subcellular location is the cytoplasm. The protein resides in the cytoskeleton. It is found in the microtubule organizing center. It localises to the centrosome. Functionally, required for the intracellular transport of organelles and vesicles, and is essential for the photoreceptor's outer segments formation, maintenance and function. The protein is Ninein-like protein (Ninl) of Danio rerio (Zebrafish).